Reading from the N-terminus, the 147-residue chain is UPF0306 protein YhbP (147 aa).

The protein belongs to the UPF0306 family.

The chain is UPF0306 protein YhbP from Salmonella arizonae (strain ATCC BAA-731 / CDC346-86 / RSK2980).